The following is a 320-amino-acid chain: Ferrochelatase (320 aa).

Residues His-194 and Glu-275 each contribute to the Fe cation site.

The protein belongs to the ferrochelatase family. As to quaternary structure, monomer.

It localises to the cytoplasm. The enzyme catalyses heme b + 2 H(+) = protoporphyrin IX + Fe(2+). It functions in the pathway porphyrin-containing compound metabolism; protoheme biosynthesis; protoheme from protoporphyrin-IX: step 1/1. Catalyzes the ferrous insertion into protoporphyrin IX. This Escherichia coli (strain SMS-3-5 / SECEC) protein is Ferrochelatase.